The chain runs to 284 residues: Elongation factor Ts (284 aa).

An involved in Mg(2+) ion dislocation from EF-Tu region spans residues T80–V83.

The protein belongs to the EF-Ts family.

Its subcellular location is the cytoplasm. Functionally, associates with the EF-Tu.GDP complex and induces the exchange of GDP to GTP. It remains bound to the aminoacyl-tRNA.EF-Tu.GTP complex up to the GTP hydrolysis stage on the ribosome. This chain is Elongation factor Ts, found in Neisseria gonorrhoeae (strain ATCC 700825 / FA 1090).